Reading from the N-terminus, the 275-residue chain is Diaminopimelate epimerase (275 aa).

Substrate contacts are provided by N12, Q45, and N65. C74 serves as the catalytic Proton donor. Substrate is bound by residues 75–76, N158, N191, and 209–210; these read GN and ER. The Proton acceptor role is filled by C218. Residue 219–220 participates in substrate binding; sequence GS.

Belongs to the diaminopimelate epimerase family. As to quaternary structure, homodimer.

It is found in the cytoplasm. It carries out the reaction (2S,6S)-2,6-diaminopimelate = meso-2,6-diaminopimelate. It participates in amino-acid biosynthesis; L-lysine biosynthesis via DAP pathway; DL-2,6-diaminopimelate from LL-2,6-diaminopimelate: step 1/1. Catalyzes the stereoinversion of LL-2,6-diaminopimelate (L,L-DAP) to meso-diaminopimelate (meso-DAP), a precursor of L-lysine and an essential component of the bacterial peptidoglycan. The polypeptide is Diaminopimelate epimerase (Shewanella amazonensis (strain ATCC BAA-1098 / SB2B)).